Here is a 349-residue protein sequence, read N- to C-terminus: GDSL esterase/lipase At2g19050 (349 aa).

Positions 1-23 (MAEAIFKALLLVIATTAFATTEA) are cleaved as a signal peptide. The active-site Nucleophile is S38. N-linked (GlcNAc...) asparagine glycosylation is present at N49. Active-site residues include D316 and H319.

Belongs to the 'GDSL' lipolytic enzyme family.

It is found in the secreted. This Arabidopsis thaliana (Mouse-ear cress) protein is GDSL esterase/lipase At2g19050.